Reading from the N-terminus, the 166-residue chain is Large ribosomal subunit protein uL10 (166 aa).

Belongs to the universal ribosomal protein uL10 family. As to quaternary structure, part of the ribosomal stalk of the 50S ribosomal subunit. The N-terminus interacts with L11 and the large rRNA to form the base of the stalk. The C-terminus forms an elongated spine to which L12 dimers bind in a sequential fashion forming a multimeric L10(L12)X complex.

In terms of biological role, forms part of the ribosomal stalk, playing a central role in the interaction of the ribosome with GTP-bound translation factors. The chain is Large ribosomal subunit protein uL10 from Hydrogenovibrio crunogenus (strain DSM 25203 / XCL-2) (Thiomicrospira crunogena).